The sequence spans 728 residues: Catalase B (728 aa).

Residues H107 and N180 contribute to the active site. Y394 contacts heme.

Belongs to the catalase family. The cofactor is heme.

Its subcellular location is the secreted. The enzyme catalyses 2 H2O2 = O2 + 2 H2O. Occurs in almost all aerobically respiring organisms and serves to protect cells from the toxic effects of hydrogen peroxide. The sequence is that of Catalase B (CATB) from Ajellomyces capsulatus (Darling's disease fungus).